Here is a 124-residue protein sequence, read N- to C-terminus: MKSIGCDIIKVGRFKNFLENKKKLERFFTHKEIENFKLKGGSVIESLAGKFAAKESLIKALSPLLQHKIHYGLKDIEVIKSLKGNAKFYLHNEIEKFAIKMNLKIYLTISHEKEYAIAFVMVEN.

Positions 7 and 55 each coordinate Mg(2+).

Belongs to the P-Pant transferase superfamily. AcpS family. Mg(2+) is required as a cofactor.

It is found in the cytoplasm. It carries out the reaction apo-[ACP] + CoA = holo-[ACP] + adenosine 3',5'-bisphosphate + H(+). In terms of biological role, transfers the 4'-phosphopantetheine moiety from coenzyme A to a Ser of acyl-carrier-protein. The protein is Holo-[acyl-carrier-protein] synthase of Borrelia garinii subsp. bavariensis (strain ATCC BAA-2496 / DSM 23469 / PBi) (Borreliella bavariensis).